Here is a 1114-residue protein sequence, read N- to C-terminus: Kinesin-like protein KIN-12F (1114 aa).

The interval 1–84 (MADNRIAGSL…RSQVSASRPR (84 aa)) is disordered. 2 stretches are compositionally biased toward polar residues: residues 10–39 (LPTSSKWSFLPKSVSSHFKPSSNPRSSNPD) and 48–80 (PNIHNPRNQSVSSKSTAYKNQMDSPNCRSQVSA). One can recognise a Kinesin motor domain in the interval 104-436 (HVKVVVRIKP…LRFGERAKAM (333 aa)). 175–182 (GQNGSGKT) provides a ligand contact to ATP. Coiled coils occupy residues 761 to 791 (QQELEKLCSEQAAKIEQLTRLVGQHKLQTED), 872 to 942 (ARSF…LRRA), and 1038 to 1081 (EVLV…HKLE). Residues 1092–1114 (NTLPESALQPLHQRNSAIEEEGM) are disordered.

This sequence belongs to the TRAFAC class myosin-kinesin ATPase superfamily. Kinesin family. KIN-12 subfamily.

The protein is Kinesin-like protein KIN-12F of Arabidopsis thaliana (Mouse-ear cress).